A 1070-amino-acid chain; its full sequence is DNA-directed RNA polymerase subunit beta (1070 aa).

It belongs to the RNA polymerase beta chain family. In plastids the minimal PEP RNA polymerase catalytic core is composed of four subunits: alpha, beta, beta', and beta''. When a (nuclear-encoded) sigma factor is associated with the core the holoenzyme is formed, which can initiate transcription.

Its subcellular location is the plastid. It is found in the chloroplast. It carries out the reaction RNA(n) + a ribonucleoside 5'-triphosphate = RNA(n+1) + diphosphate. Its function is as follows. DNA-dependent RNA polymerase catalyzes the transcription of DNA into RNA using the four ribonucleoside triphosphates as substrates. The chain is DNA-directed RNA polymerase subunit beta from Nicotiana sylvestris (Wood tobacco).